A 429-amino-acid polypeptide reads, in one-letter code: MSGATTASSGDHNNLRLPTPTLDAESQTLLQSISAEGGYAYARMAVLAVAGDQSAAEAARDMAWEQLHSGPWHSVLPVWRDAYSMACLHVAKIHFAAGEFGEALGALDMGLIMGGMLLRKDLHDSVLLVSSEARKMTKSLEEASGDFKGERLVPEVPVDVNEVRHVLANLQLLVLKILPCRSLTCKRVEKRSGLSLEGFLRDYYLPGTPVVITNSMAHWPARTKWNHLDYLNAVAGNRTVPVEVGKNYLCSDWKQELVTFSKFLERMRTNKSSPMEPTYLAQHPLFDQINELRDDICIPDYCFVGGGELQSLNAWFGPAGTVTPLHHDPHHNILAQVVGKKYIRLYPSFLQDELYPYSETMLCNSSQVDLDNIDETEFPKAMELEFMDCILEEGEMLYIPPKWWHYVRSLTMSLSVSFWWSNEAESSSS.

One can recognise a JmjC domain in the interval 272-429; that stretch reads SSPMEPTYLA…WSNEAESSSS (158 aa). Positions 326, 328, and 405 each coordinate Fe cation.

The protein belongs to the JARID1 histone demethylase family. As to quaternary structure, interacts with EFM. Binds to ATXR2, ARF7 and ARF19. The cofactor is Fe(2+). As to expression, expressed ubiquitously in vasculatures, roots, rosette leaves, stems, inflorescences and siliques. Mainly present in the root meristem and root differentiation area. Observed at high level in callus.

It localises to the nucleus. It is found in the cytoplasm. The protein localises to the endoplasmic reticulum. It carries out the reaction N(6),N(6),N(6)-trimethyl-L-lysyl(36)-[histone H3] + 2 2-oxoglutarate + 2 O2 = N(6)-methyl-L-lysyl(36)-[histone H3] + 2 formaldehyde + 2 succinate + 2 CO2. The catalysed reaction is N(6),N(6),N(6)-trimethyl-L-lysyl(27)-[histone H3] + 2 2-oxoglutarate + 2 O2 = N(6)-methyl-L-lysyl(27)-[histone H3] + 2 formaldehyde + 2 succinate + 2 CO2. It catalyses the reaction N(6),N(6)-dimethyl-L-lysyl(36)-[histone H3] + 2 2-oxoglutarate + 2 O2 = L-lysyl(36)-[histone H3] + 2 formaldehyde + 2 succinate + 2 CO2. In terms of biological role, histone demethylase that demethylates 'Lys-36' (H3K36me) of histone H3 with a specific activity for H3K36me3 and H3K36me2. Also active on 'Lys-27' (H3K27me) of histone H3 with a specific activity for H3K27me3 and H3K27me2. No activity on H3K36me1 and H3K27me1. Involved in the control of flowering time by demethylating H3K36me2 at the FT locus and repressing its expression. Acts within the central clock and contributes, in parallel with LUX, to temperature compensation, probably as a component of the evening complex, to maintain circadian period at increasing temperatures; this mechanism involves binding to and regulation of CCA1 and PRR7 promoters. Works in concert with TOC1 to promote the morning-phased clock genes CCA1 and LHY which function as components of the central oscillator. Together with JMJ32, regulates the flowering-repressor FLOWERING LOCUS C (FLC) locus by removing the repressive histone modification H3 lysine 27 trimethylation (H3K27me3), especially at elevated temperatures (e.g. 29 degrees Celsius), thus preventing extreme precocious flowering. JMJ30 and JMJ32 are regulators involved in the integration of abscisic acid (ABA) and brassinosteroids (BR) signaling pathways. Together with JMJ32, controls ABA-mediated growth arrest during the post-germination stage in unfavorable conditions, and responses to ABA during root development, via the removal of repressive histone mark (H3K27me3) from the SnRK2.8 promoter, thus promoting SnRK2.8 expression and subsequent kinase-dependent ABI3 activation. In addition, removes the repressive histone marks (H3K27me3) from the BZR1 locus in response to stress and ABA, thus activating the BR signaling pathway which, in turn, inhibits the ABA signaling pathway. Able to drive tissue identity changes to promote callus formation form somatic cells via a massive genome-wide chromatin remodeling (e.g. H3K9me3 demethylation) leading to the induction of Lateral organ Boundaries-Domain (LBD) genes (e.g. LBD16 and LBD29) that establish root primordia; when in complex with ARF proteins (e.g. ARF7 and ARF19), recruits ATXR2 which promotes the deposition of H3K36me3 at LBD genes promoters, thus ensuring their stable activation during callus formation. The chain is Lysine-specific demethylase JMJ30 from Arabidopsis thaliana (Mouse-ear cress).